The sequence spans 485 residues: Adenosylhomocysteinase (485 aa).

Residues Thr-64, Asp-139, and Glu-205 each contribute to the substrate site. 206 to 208 (TTT) is an NAD(+) binding site. Residues Lys-235 and Asp-239 each coordinate substrate. NAD(+) contacts are provided by residues Asn-240, 269–274 (GYGDVG), Glu-292, Asn-327, 348–350 (IGH), and Asn-397.

It belongs to the adenosylhomocysteinase family. As to quaternary structure, homotetramer. It depends on NAD(+) as a cofactor.

It carries out the reaction S-adenosyl-L-homocysteine + H2O = L-homocysteine + adenosine. Its pathway is amino-acid biosynthesis; L-homocysteine biosynthesis; L-homocysteine from S-adenosyl-L-homocysteine: step 1/1. Functionally, adenosylhomocysteine is a competitive inhibitor of S-adenosyl-L-methionine-dependent methyl transferase reactions; therefore adenosylhomocysteinase may play a key role in the control of methylations via regulation of the intracellular concentration of adenosylhomocysteine. The protein is Adenosylhomocysteinase (SAHH) of Triticum aestivum (Wheat).